Here is a 334-residue protein sequence, read N- to C-terminus: Aspartate carbamoyltransferase catalytic subunit (334 aa).

Carbamoyl phosphate contacts are provided by Arg71 and Thr72. Lys99 lines the L-aspartate pocket. The carbamoyl phosphate site is built by Arg121, His151, and Gln154. Arg184 and Arg239 together coordinate L-aspartate. Carbamoyl phosphate contacts are provided by Gly280 and Pro281.

The protein belongs to the aspartate/ornithine carbamoyltransferase superfamily. ATCase family. Heterododecamer (2C3:3R2) of six catalytic PyrB chains organized as two trimers (C3), and six regulatory PyrI chains organized as three dimers (R2).

The catalysed reaction is carbamoyl phosphate + L-aspartate = N-carbamoyl-L-aspartate + phosphate + H(+). It participates in pyrimidine metabolism; UMP biosynthesis via de novo pathway; (S)-dihydroorotate from bicarbonate: step 2/3. Catalyzes the condensation of carbamoyl phosphate and aspartate to form carbamoyl aspartate and inorganic phosphate, the committed step in the de novo pyrimidine nucleotide biosynthesis pathway. This is Aspartate carbamoyltransferase catalytic subunit from Pseudomonas fluorescens biotype A.